The following is a 202-amino-acid chain: Na(+)-translocating NADH-quinone reductase subunit E (202 aa).

Helical transmembrane passes span 11–31 (SVFI…FLAV), 35–55 (VTTA…SVPA), 79–99 (LSFL…QILE), 114–134 (GIFL…AFMV), 144–164 (LVFG…LAAV), and 180–200 (LGIT…FSGV).

Belongs to the NqrDE/RnfAE family. As to quaternary structure, composed of six subunits; NqrA, NqrB, NqrC, NqrD, NqrE and NqrF.

The protein localises to the cell inner membrane. The enzyme catalyses a ubiquinone + n Na(+)(in) + NADH + H(+) = a ubiquinol + n Na(+)(out) + NAD(+). Its function is as follows. NQR complex catalyzes the reduction of ubiquinone-1 to ubiquinol by two successive reactions, coupled with the transport of Na(+) ions from the cytoplasm to the periplasm. NqrA to NqrE are probably involved in the second step, the conversion of ubisemiquinone to ubiquinol. In Shewanella denitrificans (strain OS217 / ATCC BAA-1090 / DSM 15013), this protein is Na(+)-translocating NADH-quinone reductase subunit E.